The chain runs to 127 residues: Histone H2B type 1-A (127 aa).

The interval 1–32 is disordered; the sequence is MPEVSAKGTTISKKGFKKAVTKTQKKEGRKRK. Pro2 carries the post-translational modification N-acetylproline. 7 positions are modified to N6-acetyllysine; alternate: Lys7, Lys13, Lys14, Lys17, Lys18, Lys22, and Lys25. N6-crotonyllysine; alternate is present on residues Lys7, Lys13, Lys14, Lys17, Lys18, Lys22, Lys25, and Lys36. N6-lactoyllysine; alternate occurs at positions 7 and 13. Residue Lys7 forms a Glycyl lysine isopeptide (Lys-Gly) (interchain with G-Cter in SUMO2); alternate linkage. 4 positions are modified to N6-lactoyllysine; alternate: Lys17, Lys18, Lys22, and Lys25. Residue Lys22 forms a Glycyl lysine isopeptide (Lys-Gly) (interchain with G-Cter in SUMO2); alternate linkage. Lys36 bears the N6-succinyllysine; alternate mark. A Glycyl lysine isopeptide (Lys-Gly) (interchain with G-Cter in ubiquitin); alternate cross-link involves residue Lys36. Residue Ser38 is modified to Phosphoserine. The residue at position 45 (Lys45) is an N6-lactoyllysine; alternate. The residue at position 48 (Lys48) is an N6-methyllysine. Lys59 carries the post-translational modification N6,N6-dimethyllysine. At Arg81 the chain carries Dimethylated arginine. Position 87 is an N6-acetyllysine; alternate (Lys87). Residue Lys87 is modified to N6-lactoyllysine; alternate. At Lys87 the chain carries N6,N6,N6-trimethyllysine; alternate. 2 positions are modified to omega-N-methylarginine: Arg88 and Arg94. An N6-lactoyllysine; alternate modification is found at Lys110. The residue at position 110 (Lys110) is an N6-methyllysine. Phosphothreonine is present on Thr117. An N6-lactoyllysine; alternate mark is found at Lys118 and Lys122. Residues Lys118 and Lys122 each carry the N6-succinyllysine; alternate modification. Position 118 is an N6-methylated lysine; alternate (Lys118). Residue Lys122 forms a Glycyl lysine isopeptide (Lys-Gly) (interchain with G-Cter in ubiquitin); alternate linkage.

The protein belongs to the histone H2B family. In terms of assembly, the nucleosome is a histone octamer containing two molecules each of H2A, H2B, H3 and H4 assembled in one H3-H4 heterotetramer and two H2A-H2B heterodimers. Monoubiquitination at Lys-36 by the MSL1/MSL2 dimer is required for histone H3 'Lys-4' (H3K4me) and 'Lys-79' (H3K79me) methylation and transcription activation at specific gene loci, such as HOXA9 and MEIS1 loci. Similarly, monoubiquitination of Lys-122 (H2BK120Ub) by the RNF20/40 complex gives a specific tag for epigenetic transcriptional activation and is also prerequisite for histone H3 'Lys-4' and 'Lys-79' methylation. It also functions cooperatively with the FACT dimer to stimulate elongation by RNA polymerase II. H2BK120Ub also acts as a regulator of mRNA splicing: deubiquitination by USP49 is required for efficient cotranscriptional splicing of a large set of exons. Post-translationally, crotonylation (Kcr) is specifically present in male germ cells and marks testis-specific genes in post-meiotic cells, including X-linked genes that escape sex chromosome inactivation in haploid cells. Crotonylation marks active promoters and enhancers and confers resistance to transcriptional repressors. It is also associated with post-meiotically activated genes on autosomes. In terms of processing, acetylated during spermatogenesis. Acetylated form is most abundant in spermatogonia compared to spermatocytes and round spermatids. Phosphorylated at Thr-117 in spermatogonia, spermatocytes and round spermatids. Post-translationally, methylated at Lys-118 in spermatogonia, spermatocytes and round spermatids. In terms of processing, lactylated in macrophages by EP300/P300 by using lactoyl-CoA directly derived from endogenous or exogenous lactate, leading to stimulates gene transcription. In terms of tissue distribution, testis. Expressed in pachytene spermatocytes during meiotic prophase I in the absence of any significant DNA synthesis.

The protein resides in the nucleus. The protein localises to the chromosome. Its function is as follows. Variant histone specifically required to direct the transformation of dissociating nucleosomes to protamine in male germ cells. Entirely replaces classical histone H2B prior nucleosome to protamine transition and probably acts as a nucleosome dissociating factor that creates a more dynamic chromatin, facilitating the large-scale exchange of histones. Core component of nucleosome. Nucleosomes wrap and compact DNA into chromatin, limiting DNA accessibility to the cellular machineries which require DNA as a template. Histones thereby play a central role in transcription regulation, DNA repair, DNA replication and chromosomal stability. DNA accessibility is regulated via a complex set of post-translational modifications of histones, also called histone code, and nucleosome remodeling. This chain is Histone H2B type 1-A, found in Rattus norvegicus (Rat).